Consider the following 486-residue polypeptide: Odorant receptor coreceptor (486 aa).

The Cytoplasmic portion of the chain corresponds to 1-47 (MTTSMQPSKYTGLVADLMPNIRAMKYSGLFMHNFTGGSAFMKKVYSS). Residues 48-68 (VHLVFLLMQFTFILVNMALNA) form a helical membrane-spanning segment. The Extracellular segment spans residues 69–75 (EEVNELS). A helical transmembrane segment spans residues 76-96 (GNTITTLFFTHCITKFIYLAV). The Cytoplasmic segment spans residues 97 to 135 (NQKNFYRTLNIWNQVNTHPLFAESDARYHSIALAKMRKL). The chain crosses the membrane as a helical span at residues 136 to 156 (FFLVMLTTVASATAWTTITFF). Residues 157–191 (GDSVKMVVDHETNSSIPVEIPRLPIKSFYPWNASH) are Extracellular-facing. Residues Asn-169 and Asn-188 are each glycosylated (N-linked (GlcNAc...) asparagine). The chain crosses the membrane as a helical span at residues 192–212 (GMFYMISFAFQIYYVLFSMIH). The Cytoplasmic segment spans residues 213–351 (SNLCDVMFCS…VERHKHVVRL (139 aa)). Residues 352–372 (VAAIGDTYGAALLLHMLTSTI) traverse the membrane as a helical segment. Over 373–390 (KLTLLAYQATKINGVNVY) the chain is Extracellular. The helical transmembrane segment at 391–411 (AFTVVGYLGYALAQVFHFCIF) threads the bilayer. Residues 412-462 (GNRLIEESSSVMEAAYSCHWYDGSEEAKTFVQIVCQQCQKAMSISGAKFFT) lie on the Cytoplasmic side of the membrane. The helical transmembrane segment at 463 to 483 (VSLDLFASVLGAVVTYFMVLV) threads the bilayer. The Extracellular segment spans residues 484–486 (QLK).

This sequence belongs to the insect chemoreceptor superfamily. Heteromeric odorant receptor channel (TC 1.A.69) family. Orco subfamily. Heterodimer with conventional odorant receptors (ORs). Complexes exist early in the endomembrane system in olfactory sensory neurons (OSNs), coupling these complexes to the conserved ciliary trafficking pathway. In terms of tissue distribution, expression is restricted to olfactory sensory neurons (OSNs). Coexpressed with Snmp in a lateral-distal population of OSNs. Expressed in the embryonic antennal-maxillary complex, in all 21 OSNs of the larval dorsal organ, in the pupal antennal OSNs, in all 120 adult maxillary palp neurons and in approximately 70-80% of adult antennal OSNs, where expression is highest at the dorsal-medial edge. Localized to OSN cell bodies and to the distal portion of ciliated OSN dendrites.

It is found in the cell membrane. Functionally, odorant coreceptor which complexes with conventional odorant receptors (ORs) to form odorant-sensing units, providing sensitive and prolonged odorant signaling and calcium permeability. Orco is a universal and integral part of the functional odorant receptor, involved in the dendritic localization of other olfactory receptors. Expression of Orco alone leads to formation of rapid and transient ion channels not directly responding to odorants, but directly activated by intracellular cAMP or cGMP. Snmp, Or67d and lush act in concert to capture fatty-acid-derived male pheromone 11-cis vaccenyl acetate (cVA) molecules on the surface of Or67d expressing olfactory dendrites and facilitate their transfer to the odorant-receptor Orco complex. The sequence is that of Odorant receptor coreceptor (Orco) from Drosophila melanogaster (Fruit fly).